Reading from the N-terminus, the 302-residue chain is 3-methyl-2-oxobutanoate hydroxymethyltransferase 1 (302 aa).

Residues Asp75 and Asp118 each contribute to the Mg(2+) site. 3-methyl-2-oxobutanoate is bound by residues 75-76, Asp118, and Lys147; that span reads DS. Mg(2+) is bound at residue Glu149. The active-site Proton acceptor is Glu217.

It belongs to the PanB family. As to quaternary structure, homodecamer; pentamer of dimers. Mg(2+) serves as cofactor.

The protein resides in the cytoplasm. The enzyme catalyses 3-methyl-2-oxobutanoate + (6R)-5,10-methylene-5,6,7,8-tetrahydrofolate + H2O = 2-dehydropantoate + (6S)-5,6,7,8-tetrahydrofolate. It functions in the pathway cofactor biosynthesis; (R)-pantothenate biosynthesis; (R)-pantoate from 3-methyl-2-oxobutanoate: step 1/2. Its function is as follows. Catalyzes the reversible reaction in which hydroxymethyl group from 5,10-methylenetetrahydrofolate is transferred onto alpha-ketoisovalerate to form ketopantoate. The polypeptide is 3-methyl-2-oxobutanoate hydroxymethyltransferase 1 (Zymomonas mobilis subsp. mobilis (strain ATCC 31821 / ZM4 / CP4)).